We begin with the raw amino-acid sequence, 147 residues long: Globin (147 aa).

One can recognise a Globin domain in the interval 1–147 (GLDGAQKTAL…LLTMLIKAHV (147 aa)). Heme b contacts are provided by histidine 66 and histidine 98.

It belongs to the globin family. In terms of assembly, homodimer.

The protein localises to the cytoplasm. In Busycotypus canaliculatus (Channeled whelk), this protein is Globin.